The following is a 146-amino-acid chain: Basic phospholipase A2 paradoxin-like alpha chain (146 aa).

The first 27 residues, 1–27 (MHPAHLLVLLAVCVSLLGASDIPPLPL), serve as a signal peptide directing secretion. 7 disulfides stabilise this stretch: cysteine 38-cysteine 99, cysteine 54-cysteine 145, cysteine 56-cysteine 72, cysteine 71-cysteine 126, cysteine 78-cysteine 119, cysteine 88-cysteine 112, and cysteine 106-cysteine 117. Residues tyrosine 55, glycine 57, and glycine 59 each contribute to the Ca(2+) site. Residue histidine 75 is part of the active site. Aspartate 76 is a binding site for Ca(2+). Aspartate 120 is a catalytic residue.

This sequence belongs to the phospholipase A2 family. Group I subfamily. D49 sub-subfamily. In terms of assembly, heterotrimer of alpha, beta, and gamma chains; non-covalently linked. Ca(2+) is required as a cofactor. In terms of tissue distribution, expressed by the venom gland.

Its subcellular location is the secreted. It carries out the reaction a 1,2-diacyl-sn-glycero-3-phosphocholine + H2O = a 1-acyl-sn-glycero-3-phosphocholine + a fatty acid + H(+). Its function is as follows. Heterotrimer: Snake venom phospholipase A2 (PLA2) heterotrimer that acts as a potent presynaptic neurotoxin by blocking synaptic transmission and synaptic vesicle recycling. May act by binding in a calcium-dependent fashion to neurotonal pentraxin-1 (NPTX1) and neurotonal pentraxin-2 (NPTX2), but not to neuronal pentraxin receptor (NPTXR). Also binds to taipoxin-associated calcium binding protein 49 (RCN2), a protein localized in the lumen of endoplasmic reticulum. Monomer (alpha chain): Snake venom phospholipase A2 (PLA2) alpha chain that possesses the same high enzymatic activity than the heterotrimer. PLA2 catalyzes the calcium-dependent hydrolysis of the 2-acyl groups in 3-sn-phosphoglycerides. In Oxyuranus microlepidotus (Inland taipan), this protein is Basic phospholipase A2 paradoxin-like alpha chain.